Reading from the N-terminus, the 352-residue chain is Phenylalanine--tRNA ligase alpha subunit (352 aa).

Position 258 (Glu258) interacts with Mg(2+).

Belongs to the class-II aminoacyl-tRNA synthetase family. Phe-tRNA synthetase alpha subunit type 1 subfamily. Tetramer of two alpha and two beta subunits. Requires Mg(2+) as cofactor.

It localises to the cytoplasm. The catalysed reaction is tRNA(Phe) + L-phenylalanine + ATP = L-phenylalanyl-tRNA(Phe) + AMP + diphosphate + H(+). This chain is Phenylalanine--tRNA ligase alpha subunit, found in Staphylococcus saprophyticus subsp. saprophyticus (strain ATCC 15305 / DSM 20229 / NCIMB 8711 / NCTC 7292 / S-41).